We begin with the raw amino-acid sequence, 79 residues long: Defensin 2 (79 aa).

The signal sequence occupies residues 1-32 (VQKRTIIMEKKMAGFCIFFLILFLAQEYGVEG). Cystine bridges form between Cys35–Cys79, Cys46–Cys67, and Cys52–Cys73.

Belongs to the DEFL family. In terms of assembly, may form dimers. Not glycosylated. In terms of processing, has 4 disulfide bonds.

Functionally, probably has antifungal activity. This chain is Defensin 2, found in Arachis hypogaea (Peanut).